A 119-amino-acid polypeptide reads, in one-letter code: Large ribosomal subunit protein bL20 (119 aa).

Belongs to the bacterial ribosomal protein bL20 family.

Binds directly to 23S ribosomal RNA and is necessary for the in vitro assembly process of the 50S ribosomal subunit. It is not involved in the protein synthesizing functions of that subunit. In Geobacillus kaustophilus (strain HTA426), this protein is Large ribosomal subunit protein bL20.